Here is a 947-residue protein sequence, read N- to C-terminus: Protein NETWORKED 2A (947 aa).

The NAB domain maps to 10-90; that stretch reads YSWWWASHIR…ERYDHLSREL (81 aa). The disordered stretch occupies residues 105-131; it reads VQFPLEDDSDENEDYDGRPRKPPKHLH. Residues 109-118 are compositionally biased toward acidic residues; that stretch reads LEDDSDENED. 2 coiled-coil regions span residues 348 to 454 and 568 to 619; these read KLAE…IQDV and VLRD…QKLD. Basic and acidic residues-rich tracts occupy residues 618 to 627 and 635 to 644; these read LDTTGKDSPH and LEHEQGHHET. Disordered stretches follow at residues 618–675, 743–763, and 911–947; these read LDTT…RTKS, RIES…AVAS, and KNRQ…KLPE. Residues 645-660 show a composition bias toward polar residues; it reads VSISPTSNFSVATTPH. Over residues 662 to 675 the composition is skewed to basic and acidic residues; sequence QVGDVKRTPGRTKS. A coiled-coil region spans residues 722–809; sequence VHQIQKYQTT…LANIQEEIAR (88 aa). Polar residues-rich tracts occupy residues 749–761 and 915–927; these read QQES…NTAV and QKQS…SCVS.

Belongs to the NET family. In terms of tissue distribution, expressed specifically in pollen.

Its subcellular location is the cell membrane. In terms of biological role, plant-specific actin binding protein. Associates with F-actin at the plasma membrane in growing pollen tubes. May be part of a membrane-cytoskeletal adapter complex. The chain is Protein NETWORKED 2A from Arabidopsis thaliana (Mouse-ear cress).